The chain runs to 818 residues: SIT4-associating protein SAP4 (818 aa).

Disordered stretches follow at residues 33 to 60 (ETSS…RDRS) and 499 to 526 (TSNT…KNIK). Residues 509–518 (NNDSNDSNDN) show a composition bias toward low complexity.

This sequence belongs to the SAPS family. In terms of processing, hyperphosphorylated in the absence of SIT4.

In terms of biological role, associates with the SIT4 phosphatase in a cell cycle dependent manner. May be directly or indirectly involved in SIT4-dependent functions in budding and in normal G1 cyclin expression. The protein is SIT4-associating protein SAP4 (SAP4) of Saccharomyces cerevisiae (strain ATCC 204508 / S288c) (Baker's yeast).